We begin with the raw amino-acid sequence, 863 residues long: MICAL-like protein 1 (863 aa).

Residues 2–108 (AGPRGALLAW…YVSQYYNHFC (107 aa)) enclose the Calponin-homology (CH) domain. Disordered regions lie at residues 119–162 (RKGL…TPSS) and 224–670 (GTRS…PLIK). Over residues 125 to 135 (CSPPSVAPTPV) the composition is skewed to pro residues. Composition is skewed to low complexity over residues 143–159 (GEELSSGSLSEQGTGQT) and 224–244 (GTRSGTRPGPFSQPKQQHQQQ). The 64-residue stretch at 162–225 (STCAACQQHV…EHCARLGPGT (64 aa)) folds into the LIM zinc-binding domain. 2 positions are modified to phosphoserine: S295 and S309. T318 is subject to Phosphothreonine. Residues 325 to 340 (LQQENLVEQAGSSSLV) are compositionally biased toward polar residues. Pro residues predominate over residues 384–395 (APLPPSSSPGPP). Phosphoserine is present on S391. Positions 425 to 427 (NPF) match the NPF1 motif. Positions 427 to 438 (FEEEEEDKEEEA) are enriched in acidic residues. The segment covering 439 to 450 (PAAPSLATSPAL) has biased composition (low complexity). Residues T467 and T469 each carry the phosphothreonine modification. S470, S471, S484, and S486 each carry phosphoserine. Low complexity-rich tracts occupy residues 482 to 495 (APSASPLALHASRL), 505 to 520 (PSPALSVESLSSESAS), and 553 to 566 (SLSTNSSLASSGEL). 2 positions are modified to phosphoserine: S578 and S621. The NPF2 signature appears at 633 to 635 (NPF). Residues 638–656 (KPSPAASPATKKATKGSKP) are compositionally biased toward low complexity. The segment at 652–863 (KGSKPVRPPA…AKSKSPRDKS (212 aa)) is mediates the interaction with RAB13 and RAB35 and intramolecular interaction with the CH domain. Residues 671 to 818 (RKVQADQYIP…EEEEDKMLEA (148 aa)) enclose the bMERB domain. Residues 682-711 (EDIHGEMDTIERRLDALEHRGVLLEEKLRG) adopt a coiled-coil conformation. Residues 700–863 (HRGVLLEEKL…AKSKSPRDKS (164 aa)) form a necessary and sufficient to associate with tubular recycling endosome membranes, mediate phosphatidic acid-binding and membrane tubulation region. S740 is subject to Phosphoserine. A coiled-coil region spans residues 785 to 830 (MQELVTLIEQRNAIINCLDEDRQREEEEDKMLEAMIKKKEFQREAE).

As to quaternary structure, homooligomer. Interacts (via NPF1 motif) with EHD1 (via EH domain); the interaction is direct and probably recruits EHD1 to membranes. Interacts with EHD3 (via EH domain). Interacts with RAB35 (GTP-bound form); the interaction is direct and probably recruits MICALL1 to membranes. Interacts with ACAP2; the interaction is indirect through RAB35. Interacts with RAB8A (GTP-bound form); regulates RAB8A association with recycling endosomes. Interacts with RAB13 (GTP-bound form). Interacts with ARF6 (GTP-bound form). Interacts with PACSIN2 (via the SH3 domain). Interacts with DPYSL2.

It localises to the recycling endosome membrane. The protein resides in the late endosome membrane. The protein localises to the cell projection. It is found in the cilium membrane. Its subcellular location is the cytoplasm. It localises to the cytoskeleton. The protein resides in the microtubule organizing center. The protein localises to the centrosome. It is found in the centriole. Lipid-binding protein with higher affinity for phosphatidic acid, a lipid enriched in recycling endosome membranes. On endosome membranes, acts as a downstream effector of Rab proteins recruiting cytosolic proteins to regulate membrane tubulation. Involved in a late step of receptor-mediated endocytosis regulating for instance endocytosed-EGF receptor trafficking. Alternatively, regulates slow endocytic recycling of endocytosed proteins back to the plasma membrane. Also involved in cargo protein delivery to the plasma membrane. Plays a role in ciliogenesis coordination, recruits EHD1 to primary cilium where it is anchored to the centriole through interaction with tubulins. May indirectly play a role in neurite outgrowth. The protein is MICAL-like protein 1 (MICALL1) of Homo sapiens (Human).